The following is a 145-amino-acid chain: Small ribosomal subunit protein uS9 (145 aa).

It belongs to the universal ribosomal protein uS9 family.

It is found in the cytoplasm. This Fritillaria agrestis (Stinkbells) protein is Small ribosomal subunit protein uS9 (RPS16).